The sequence spans 562 residues: Arylsulfatase H (562 aa).

Ca(2+)-binding residues include Asp15, Asp16, and Cys55. Catalysis depends on Cys55, which acts as the Nucleophile. Cys55 carries the post-translational modification 3-oxoalanine (Cys). Residue Lys115 coordinates substrate. His117 is an active-site residue. 2 helical membrane passes run 167–187 (LWIS…PKYA) and 189–209 (WFVV…LFFI). Position 271 (His271) interacts with substrate. Residues Asp323 and Asn324 each contribute to the Ca(2+) site.

This sequence belongs to the sulfatase family. It depends on Ca(2+) as a cofactor. The conversion to 3-oxoalanine (also known as C-formylglycine, FGly), of a serine or cysteine residue in prokaryotes and of a cysteine residue in eukaryotes, is critical for catalytic activity.

It is found in the membrane. The sequence is that of Arylsulfatase H (ARSH) from Canis lupus familiaris (Dog).